The primary structure comprises 102 residues: Scorpine-like-2 (102 aa).

Positions 1-19 (MQTQCTVLQLLVLVALCSC) are cleaved as a signal peptide. In terms of domain architecture, BetaSPN-type CS-alpha/beta spans 63 to 102 (QQLCLIVDTVQWCNKSCLAAENKEGYCHGTKCKCGIKVSY). Disulfide bonds link Cys66–Cys89, Cys75–Cys94, and Cys79–Cys96.

The protein belongs to the long chain scorpion toxin family. Class 3 subfamily. Expressed by the venom gland.

The protein localises to the secreted. Inhibits voltage-gated potassium channels. This Urodacus yaschenkoi (Inland robust scorpion) protein is Scorpine-like-2.